A 173-amino-acid chain; its full sequence is uncharacterized protein (173 aa).

Residues 2–171 (VTVREAKLED…PDLSALKTLL (170 aa)) enclose the N-acetyltransferase domain.

This sequence belongs to the acetyltransferase family.

This is an uncharacterized protein from Bacillus subtilis (strain 168).